Consider the following 131-residue polypeptide: uncharacterized protein (131 aa).

Transmembrane regions (helical) follow at residues 7-29 (LLKF…SLLY), 49-69 (LVKV…LIAL), 76-98 (LILI…LFTY), and 102-124 (ELSE…FLYL).

It localises to the cell membrane. This is an uncharacterized protein from Aquifex aeolicus (strain VF5).